The chain runs to 96 residues: Large ribosomal subunit protein bL27 (96 aa).

The propeptide occupies 1 to 9 (MLNMNLQLL).

This sequence belongs to the bacterial ribosomal protein bL27 family. The N-terminus is cleaved by ribosomal processing cysteine protease Prp.

This is Large ribosomal subunit protein bL27 from Clostridioides difficile (strain 630) (Peptoclostridium difficile).